The primary structure comprises 464 residues: NAD(P) transhydrogenase subunit beta (464 aa).

The next 6 helical transmembrane spans lie at 54–74, 86–106, 126–146, 164–184, 191–211, and 227–247; these read VQAY…GTVI, LVAA…TGAL, VEMS…VIAF, HPLN…FAAT, FALM…IGGA, and AAAG…GALV. NADP(+) is bound by residues 316-317, 348-353, 390-394, 425-432, and 451-452; these read YG, VAGRMP, GANDV, KRSMASGY, and DA.

It belongs to the PNT beta subunit family. As to quaternary structure, complex of an alpha and a beta chain; in Rhodospirillum, the alpha chain seems to be made of two subunits.

The protein resides in the cell inner membrane. The catalysed reaction is NAD(+) + NADPH + H(+)(in) = NADH + NADP(+) + H(+)(out). Its function is as follows. The transhydrogenation between NADH and NADP is coupled to respiration and ATP hydrolysis and functions as a proton pump across the membrane. The protein is NAD(P) transhydrogenase subunit beta (pntB) of Rhodospirillum rubrum (strain ATCC 11170 / ATH 1.1.1 / DSM 467 / LMG 4362 / NCIMB 8255 / S1).